The following is a 207-amino-acid chain: Partner of Y14 and mago (207 aa).

Disordered regions lie at residues 1-28 (MSTY…KARR) and 52-133 (QRQA…NSIS). The stretch at 64-91 (LLAAESKKEREKQERTRAKKQEKESGRQ) forms a coiled coil. Over residues 68-90 (ESKKEREKQERTRAKKQEKESGR) the composition is skewed to basic and acidic residues. Positions 123-133 (PSGSRDINSIS) are enriched in polar residues. Residues 152 to 184 (AKQLKKLRKKIREIEQIESRIQAGEQKKLDKDQ) adopt a coiled-coil conformation.

Belongs to the pym family. As to quaternary structure, interacts (via N-terminus) with mago and tsu/RBM8A; the interaction is direct. In terms of tissue distribution, expression detected in the ovary. In the oocyte expressed in the germarium, nurse cell and follicle cell.

It localises to the cytoplasm. It is found in the nucleus. Functionally, regulator of the exon junction complex (EJC), a multiprotein complex that associates immediately upstream of the exon-exon junction on mRNAs and serves as a positional landmark for the intron exon structure of genes and directs post-transcriptional processes in the cytoplasm such as mRNA export, nonsense-mediated mRNA decay (NMD) or translation. Acts as an EJC disassembly factor by disrupting mature EJC from spliced mRNAs. Required for normal localization of osk mRNA to the posterior pole of the developing oocyte. Does not interact with the small ribosomal unit or components of the translation initiation complex. May not function in cap-dependent translation regulation. The chain is Partner of Y14 and mago from Drosophila melanogaster (Fruit fly).